A 151-amino-acid polypeptide reads, in one-letter code: Large ribosomal subunit protein uL13 (151 aa).

This sequence belongs to the universal ribosomal protein uL13 family. In terms of assembly, part of the 50S ribosomal subunit.

Functionally, this protein is one of the early assembly proteins of the 50S ribosomal subunit, although it is not seen to bind rRNA by itself. It is important during the early stages of 50S assembly. This Acaryochloris marina (strain MBIC 11017) protein is Large ribosomal subunit protein uL13.